The sequence spans 893 residues: 104 kDa microneme/rhoptry antigen (893 aa).

A signal peptide spans 1–19 (MKFLVLLFNILCLFPILGA). 3 disordered regions span residues 492–666 (SKKK…FDPK), 681–799 (KTKE…PTGK), and 818–873 (KEHM…RKPD). 2 stretches are compositionally biased toward basic and acidic residues: residues 525 to 565 (SESK…EHKP) and 573 to 591 (KRPE…ESPK). Positions 595-606 (RPVSPQRPVSPK) are enriched in low complexity. Composition is skewed to basic and acidic residues over residues 731–755 (EEVK…DSPT), 788–797 (EAGRILRDPT), and 818–830 (KEHM…KIVV). Residues 831–841 (DDDGTEADDED) are compositionally biased toward acidic residues. The span at 851-869 (STVRRRRPRPKKSSKSSKP) shows a compositional bias: basic residues. A lipid anchor (GPI-anchor amidated aspartate) is attached at aspartate 873. A propeptide spans 874 to 893 (SAFVPSIIFIFLVSLIVGIL) (removed in mature form).

The protein localises to the cell membrane. This chain is 104 kDa microneme/rhoptry antigen, found in Theileria annulata.